A 94-amino-acid chain; its full sequence is Large ribosomal subunit protein bL31 (94 aa).

The disordered stretch occupies residues Lys64–Ser94. Over residues Asp73–Ser94 the composition is skewed to basic and acidic residues.

This sequence belongs to the bacterial ribosomal protein bL31 family. Type A subfamily. As to quaternary structure, part of the 50S ribosomal subunit.

Functionally, binds the 23S rRNA. The chain is Large ribosomal subunit protein bL31 from Prochlorococcus marinus (strain SARG / CCMP1375 / SS120).